We begin with the raw amino-acid sequence, 338 residues long: Ketol-acid reductoisomerase (NADP(+)) (338 aa).

One can recognise a KARI N-terminal Rossmann domain in the interval M1–T181. NADP(+)-binding positions include Y24–Q27, R47, S50, S52, and D82–Q85. H107 is an active-site residue. An NADP(+)-binding site is contributed by G133. The KARI C-terminal knotted domain maps to T182 to I327. Positions 190, 194, 226, and 230 each coordinate Mg(2+). S251 lines the substrate pocket.

It belongs to the ketol-acid reductoisomerase family. It depends on Mg(2+) as a cofactor.

The enzyme catalyses (2R)-2,3-dihydroxy-3-methylbutanoate + NADP(+) = (2S)-2-acetolactate + NADPH + H(+). The catalysed reaction is (2R,3R)-2,3-dihydroxy-3-methylpentanoate + NADP(+) = (S)-2-ethyl-2-hydroxy-3-oxobutanoate + NADPH + H(+). It functions in the pathway amino-acid biosynthesis; L-isoleucine biosynthesis; L-isoleucine from 2-oxobutanoate: step 2/4. It participates in amino-acid biosynthesis; L-valine biosynthesis; L-valine from pyruvate: step 2/4. Its function is as follows. Involved in the biosynthesis of branched-chain amino acids (BCAA). Catalyzes an alkyl-migration followed by a ketol-acid reduction of (S)-2-acetolactate (S2AL) to yield (R)-2,3-dihydroxy-isovalerate. In the isomerase reaction, S2AL is rearranged via a Mg-dependent methyl migration to produce 3-hydroxy-3-methyl-2-ketobutyrate (HMKB). In the reductase reaction, this 2-ketoacid undergoes a metal-dependent reduction by NADPH to yield (R)-2,3-dihydroxy-isovalerate. In Teredinibacter turnerae (strain ATCC 39867 / T7901), this protein is Ketol-acid reductoisomerase (NADP(+)).